The following is a 301-amino-acid chain: Pseudouridine-5'-phosphate glycosidase (301 aa).

Glu23 functions as the Proton donor in the catalytic mechanism. Substrate-binding residues include Lys84 and Val104. Asp136 is a Mn(2+) binding site. 138–140 lines the substrate pocket; sequence SRD. Lys157 acts as the Nucleophile in catalysis.

It belongs to the pseudouridine-5'-phosphate glycosidase family. As to quaternary structure, homotrimer. The cofactor is Mn(2+).

It carries out the reaction D-ribose 5-phosphate + uracil = psi-UMP + H2O. Its function is as follows. Catalyzes the reversible cleavage of pseudouridine 5'-phosphate (PsiMP) to ribose 5-phosphate and uracil. Functions biologically in the cleavage direction, as part of a pseudouridine degradation pathway. The polypeptide is Pseudouridine-5'-phosphate glycosidase (Mycoplasmopsis agalactiae (strain NCTC 10123 / CIP 59.7 / PG2) (Mycoplasma agalactiae)).